The chain runs to 461 residues: Photosystem II CP43 reaction center protein (461 aa).

A propeptide spanning residues 1 to 2 (ME) is cleaved from the precursor. T3 is modified (N-acetylthreonine). The residue at position 3 (T3) is a Phosphothreonine. A run of 5 helical transmembrane segments spans residues 57 to 81 (LFEV…PHLA), 122 to 143 (LLGP…KDRN), 166 to 188 (KALY…RKIT), 243 to 263 (KPFA…LSYS), and 279 to 300 (WFNN…ASQA). E355 contacts [CaMn4O5] cluster. A helical membrane pass occupies residues 435-459 (RARAAAAGFEKGIDRDFEPVLSMTP).

It belongs to the PsbB/PsbC family. PsbC subfamily. In terms of assembly, PSII is composed of 1 copy each of membrane proteins PsbA, PsbB, PsbC, PsbD, PsbE, PsbF, PsbH, PsbI, PsbJ, PsbK, PsbL, PsbM, PsbT, PsbX, PsbY, PsbZ, Psb30/Ycf12, at least 3 peripheral proteins of the oxygen-evolving complex and a large number of cofactors. It forms dimeric complexes. Requires Binds multiple chlorophylls and provides some of the ligands for the Ca-4Mn-5O cluster of the oxygen-evolving complex. It may also provide a ligand for a Cl- that is required for oxygen evolution. PSII binds additional chlorophylls, carotenoids and specific lipids. as cofactor.

The protein localises to the plastid. It localises to the chloroplast thylakoid membrane. Its function is as follows. One of the components of the core complex of photosystem II (PSII). It binds chlorophyll and helps catalyze the primary light-induced photochemical processes of PSII. PSII is a light-driven water:plastoquinone oxidoreductase, using light energy to abstract electrons from H(2)O, generating O(2) and a proton gradient subsequently used for ATP formation. This is Photosystem II CP43 reaction center protein from Nicotiana sylvestris (Wood tobacco).